A 29-amino-acid polypeptide reads, in one-letter code: Cyclotide mden-C (29 aa).

The cyclopeptide (Gly-Asn) cross-link spans 1–29; it reads GKPICGETCFKGKCYTPGCTCSYPVCKKN. 3 disulfide bridges follow: Cys-5/Cys-19, Cys-9/Cys-21, and Cys-14/Cys-26.

Belongs to the cyclotide family. In terms of processing, this is a cyclic peptide.

In terms of biological role, probably participates in a plant defense mechanism. The polypeptide is Cyclotide mden-C (Melicytus dentatus (Tree violet)).